A 2090-amino-acid polypeptide reads, in one-letter code: Nuclear pore complex protein Nup214 (2090 aa).

The residue at position 2 (Gly2) is an N-acetylglycine. Residue Ser30 is modified to Phosphoserine. Blade repeat units lie at residues 41 to 93, 94 to 150, 151 to 193, 194 to 239, 240 to 303, 304 to 359, and 360 to 404; these read LLAV…PMKF, PIHH…DAGG, MVID…PSTV, AVTS…ESDH, PVRV…ERQH, HYYL…KSDD, and SLPM…FYMI. Residues 41 to 404 are seven-bladed beta propeller; sequence LLAVSNKYGL…DGVLCPFYMI (364 aa). A 44 X 2 AA repeats of F-G region spans residues 236 to 1418; sequence ESDHPVRVLD…AVFGSLPVTS (1183 aa). Thr416 is modified (phosphothreonine). Residues Ser421, Ser430, and Ser433 each carry the phosphoserine modification. A disordered region spans residues 422-460; that stretch reads LEGERQPKSPGSTPTTPTSSQAPQKLDASAAAAPASLPP. The span at 429–441 shows a compositional bias: low complexity; the sequence is KSPGSTPTTPTSS. A phosphothreonine mark is found at Thr434, Thr437, and Thr439. Positions 450 to 586 are (Microbial infection) Binds human adenovirus 5 (HAdV-5) protein L3 (hexon); that stretch reads SAAAAPASLP…PPSTSAVKVN (137 aa). Residues 481–2076 form an 11 X 5 AA approximate repeats region; that stretch reads VFSFGSSSLK…GSGTGGFSFG (1596 aa). The stretch at 484–485 is repeat 1; the sequence is FG. Low complexity-rich tracts occupy residues 489 to 513 and 524 to 536; these read LKSS…KAAP and PPSK…TPAA. Positions 489–536 are disordered; the sequence is LKSSATVTGEPPSYSSGSDSSKAAPGPGPSTFSFVPPSKASLAPTPAA. Repeat 2 spans residues 548-549; it reads FG. 2 stretches are compositionally biased toward low complexity: residues 597–629 and 637–658; these read STPV…HPTP and VPLK…SSSP. Positions 597–700 are disordered; sequence STPVSSSQSA…KQGHQWKDSD (104 aa). Residues Ser651, Ser657, and Ser666 each carry the phosphoserine modification. Thr670 is modified (phosphothreonine). Ser678 is modified (phosphoserine). The stretch at 680 to 1209 forms a coiled coil; it reads QAKSLQPAVA…VTSTPSASGQ (530 aa). A compositionally biased stretch (basic and acidic residues) spans 691 to 700; it reads KQGHQWKDSD. Leucine-zipper regions lie at residues 740–768 and 861–882; these read LRTE…ISSL and LANN…VDSL. The residue at position 760 (Ser760) is a Phosphoserine. 4 positions are modified to phosphoserine: Ser940, Ser970, Ser974, and Ser989. A disordered region spans residues 987 to 1009; the sequence is TSSVSQSLESEDARTSCKDDEAV. A compositionally biased stretch (basic and acidic residues) spans 997–1007; the sequence is EDARTSCKDDE. Thr1021 carries the phosphothreonine modification. Ser1023, Ser1045, Ser1056, and Ser1081 each carry phosphoserine. Over residues 1128–1149 the composition is skewed to polar residues; that stretch reads LKNNPATPSTAMGSSVPYSTAK. Residues 1128–1152 are disordered; sequence LKNNPATPSTAMGSSVPYSTAKTPH. A phosphothreonine mark is found at Thr1134, Thr1150, and Thr1156. Composition is skewed to polar residues over residues 1168 to 1188 and 1199 to 1213; these read LINS…SSGD and AVTS…FSKP. The disordered stretch occupies residues 1168–1213; the sequence is LINSLKPSGPTPASGQLSSGDKASGTAKIETAVTSTPSASGQFSKP. Ser1181 is modified (phosphoserine). Repeat unit 3 spans residues 1225-1226; sequence FG. Polar residues-rich tracts occupy residues 1234-1254 and 1273-1285; these read SNFT…QPDA and PPSG…NTTP. 2 disordered regions span residues 1234–1316 and 1337–1408; these read SNFT…PPSK and LRVG…TSST. Residues 1288 to 1299 are compositionally biased toward low complexity; the sequence is PAASSSRPVAPS. The segment covering 1301–1310 has biased composition (polar residues); that stretch reads TALSTTSSKL. Residue Thr1312 is modified to Phosphothreonine. The span at 1347–1368 shows a compositional bias: polar residues; that stretch reads KPTNKASSTSLTSTQPTKTSGV. Ser1353 carries the phosphoserine modification. Residues 1386 to 1408 show a composition bias toward low complexity; that stretch reads PPVTSSATTTSVAPPAATSTSST. The interval 1409–2084 is 18 X 4 AA approximate repeats; the sequence is AVFGSLPVTS…FGSNNSSVQG (676 aa). 4 repeat units span residues 1411–1412, 1427–1428, 1441–1442, and 1473–1474. The 11 X 3 AA approximate repeats stretch occupies residues 1427-2085; the sequence is FGGTSLSAGK…GSNNSSVQGF (659 aa). Polar residues predominate over residues 1438–1450; it reads SFSFGSQQTNSTV. The segment at 1438–1467 is disordered; it reads SFSFGSQQTNSTVPPSAPPPTTAATPLPTS. Low complexity-rich tracts occupy residues 1479-1489 and 1508-1527; these read SATTPSLPMSA and SEVS…AQLP. A disordered region spans residues 1479–1539; the sequence is SATTPSLPMS…PPQTSDSVKK (61 aa). Residue Lys1538 forms a Glycyl lysine isopeptide (Lys-Gly) (interchain with G-Cter in SUMO2) linkage. 18 consecutive repeat copies span residues 1635–1636, 1674–1675, 1686–1687, 1713–1714, 1721–1722, 1726–1727, 1732–1733, 1756–1757, 1772–1773, 1786–1787, 1798–1799, 1806–1807, 1812–1813, 1819–1820, 1842–1843, 1851–1852, 1862–1863, and 1874–1875. The disordered stretch occupies residues 1884-1903; it reads GFFSGLGGKPSQDAANKNPF. 5 repeat units span residues 1910 to 1911, 1922 to 1923, 1930 to 1931, 1938 to 1939, and 1959 to 1960. At Ser1963 the chain carries Phosphoserine. 3 repeat units span residues 1970–1971, 1976–1977, and 1982–1983. Ser1985 bears the Phosphoserine mark. A run of 11 repeats spans residues 1988-1989, 1994-1995, 2012-2013, 2024-2025, 2026-2027, 2035-2036, 2046-2047, 2056-2057, 2066-2067, 2075-2076, and 2085-2086.

Homodimer. Part of the nuclear pore complex (NPC). Interacts with NUP88. Interacts with ZFP36; this interaction increases upon lipopolysaccharide (LPS) stimulation. Interacts with DDX19. Interacts with XPO1. Interacts with XPO5. In terms of assembly, (Microbial infection) Interacts with human herpes virus 1 (HHV-1) protein UL25; this interaction might be essential to the capsid docking onto the host nuclear pore. As to quaternary structure, (Microbial infection) Interacts (via N-terminus) with human adenovirus 5 (HAdV-5) protein L3 (hexon); this interaction might be essential for the release of the virus genome to the nucleus. In terms of processing, probably glycosylated as it reacts with wheat germ agglutinin (WGA). Expressed in thymus, spleen, bone marrow, kidney, brain and testis, but hardly in all other tissues or in whole embryos during development.

The protein localises to the nucleus. Its subcellular location is the nuclear pore complex. Its function is as follows. Part of the nuclear pore complex. Has a critical role in nucleocytoplasmic transport. May serve as a docking site in the receptor-mediated import of substrates across the nuclear pore complex. Functionally, (Microbial infection) Required for capsid disassembly of the human adenovirus 5 (HadV-5) leading to release of the viral genome to the nucleus (in vitro). The sequence is that of Nuclear pore complex protein Nup214 (NUP214) from Homo sapiens (Human).